The primary structure comprises 395 residues: MARKYAKRSKSRPRTARRSPKSRSRPRSRAPRRKAPSRPRIQRVNPVRRPMNSTAAQSLAIYRNPFSHSPGQPKIPDGKAIMSIGSKVQVSAQLLNKASGDDILHVFLYPGLTQGMVVFGDSKEQGTRGFTAYGYNDHMTYDASSVYNAGTGADGNIESNDNINEWRLVSQGLKLSLLNTDEENDGWFECVRYKDALRANEFAFYSGDNLEQTTATVFGPDITFGSTLLTKNLVNSPTYVSGALEDIDKYEFKLQAQSEQHDFKRIPDRWYTEHGVDTVTVSGVNDYVTLQADTAQAHSIHNSLVDDSFDAVYIRIHCRTNSGAGATTGSKLLAHLVSNQELVYDEDQNEHKFMTQAAMAKAEFMKANEMARKSQVGADMIGNVRSGVRSQRRPR.

The segment covering 1–41 has biased composition (basic residues); the sequence is MARKYAKRSKSRPRTARRSPKSRSRPRSRAPRRKAPSRPRI. A disordered region spans residues 1–51; it reads MARKYAKRSKSRPRTARRSPKSRSRPRSRAPRRKAPSRPRIQRVNPVRRPM. The Nuclear localization signal signature appears at 2-9; the sequence is ARKYAKRS.

Its subcellular location is the host nucleus. The protein localises to the virion. Self-assembles to form the virion icosahedral capsid. The protein is Capsid protein of Chaetoceros setoense (Chaetoceros setoense DNA virus).